The sequence spans 200 residues: Snake venom serine protease VaSP1 (200 aa).

Positions 1–200 (VIGGDECNIN…EIQGIVSYGK (200 aa)) constitute a Peptidase S1 domain. Active-site charge relay system residues include aspartate 88 and serine 182.

As to quaternary structure, monomer. N-glycosylated. The protein exist in multiple isoforms. As to expression, expressed by the venom gland.

It is found in the secreted. Inhibited by Pefabloc (90% inhibition), DTT (90%), Zn(2+) (80%), trypsin inhibitor II (50%), and benzamidine (45%), but not inhibited by EDTA, Ca(2+), Mg(2+) and L-Cys. Functionally, snake venom serine protease active on several blood coagulation enzymes. It completely cleaves fibrinogen Aalpha chain (FGA) after 120 minutes, partially cleaves Bbeta chain (FGB) (overnight) and has no activity on gamma chain. It does not release fibrinopeptides A and/or B exclusively, since the enzyme does not provoke fibrin polymerisation. It also degrades fibrin as efficiently as plasmin, and exhibits potent ability to cleave plasminogen and prothrombin, as well as heavy chain of factor X (F10). In vitro, it cleaves insulin B-chain (at positions His38-Leu39, Ala40-Leu41 and Tyr16-Leu17). This chain is Snake venom serine protease VaSP1, found in Vipera ammodytes ammodytes (Western sand viper).